A 96-amino-acid chain; its full sequence is Putative pterin-4-alpha-carbinolamine dehydratase (96 aa).

Belongs to the pterin-4-alpha-carbinolamine dehydratase family.

It catalyses the reaction (4aS,6R)-4a-hydroxy-L-erythro-5,6,7,8-tetrahydrobiopterin = (6R)-L-erythro-6,7-dihydrobiopterin + H2O. This is Putative pterin-4-alpha-carbinolamine dehydratase from Prochlorococcus marinus (strain MIT 9301).